A 244-amino-acid polypeptide reads, in one-letter code: Phosphoadenosine 5'-phosphosulfate reductase (244 aa).

Cys239 acts as the Nucleophile; cysteine thiosulfonate intermediate in catalysis.

The protein belongs to the PAPS reductase family. CysH subfamily.

It localises to the cytoplasm. The catalysed reaction is [thioredoxin]-disulfide + sulfite + adenosine 3',5'-bisphosphate + 2 H(+) = [thioredoxin]-dithiol + 3'-phosphoadenylyl sulfate. It participates in sulfur metabolism; hydrogen sulfide biosynthesis; sulfite from sulfate: step 3/3. Its function is as follows. Catalyzes the formation of sulfite from phosphoadenosine 5'-phosphosulfate (PAPS) using thioredoxin as an electron donor. This Cronobacter sakazakii (strain ATCC BAA-894) (Enterobacter sakazakii) protein is Phosphoadenosine 5'-phosphosulfate reductase.